Consider the following 285-residue polypeptide: Ribosomal RNA small subunit methyltransferase H (285 aa).

S-adenosyl-L-methionine contacts are provided by residues 34–36 (AGH), Asp51, Phe75, Asp96, and His103. The interval 259-285 (LVPSEKEAAQNPRARSAKLRAAEKEAP) is disordered.

Belongs to the methyltransferase superfamily. RsmH family.

The protein localises to the cytoplasm. It catalyses the reaction cytidine(1402) in 16S rRNA + S-adenosyl-L-methionine = N(4)-methylcytidine(1402) in 16S rRNA + S-adenosyl-L-homocysteine + H(+). In terms of biological role, specifically methylates the N4 position of cytidine in position 1402 (C1402) of 16S rRNA. This Thermus thermophilus (strain ATCC 27634 / DSM 579 / HB8) protein is Ribosomal RNA small subunit methyltransferase H.